The sequence spans 295 residues: MSDKLHLVIVTGMSGAGKTVAIQSFEDLGYFTIDNMPPTLLPKFLELIRHSQDNNKIALVVDMRSRSFFSEIREVLDEIEGAEDLDFKVLFLDATDSELVARYKETRRSHPLAADGRVLDGIQLERELLAPLKNMSQNVIDTTELTPRNLRKVISEQFASQDNQPSFRIEVMSFGFKYGLPLDADLVFDVRFLPNPYYKLELRNLTGLDAPVFDYVMEHQESEEFYSHLLGLIEPILPGYQKEGKSVLTIAVGCTGGQHRSVAFAKRLADDLEKNWNVNRSHRDKDRRKETVNRS.

12-19 contributes to the ATP binding site; the sequence is GMSGAGKT. Residue 62-65 participates in GTP binding; sequence DMRS.

This sequence belongs to the RapZ-like family.

In terms of biological role, displays ATPase and GTPase activities. In Streptococcus suis (strain 98HAH33), this protein is Nucleotide-binding protein SSU98_0619.